A 135-amino-acid chain; its full sequence is Large ribosomal subunit protein bL12c (135 aa).

The protein belongs to the bacterial ribosomal protein bL12 family. As to quaternary structure, homodimer. Part of the ribosomal stalk of the 50S ribosomal subunit. Forms a multimeric L10(L12)X complex, where L10 forms an elongated spine to which 2 to 4 L12 dimers bind in a sequential fashion. Binds GTP-bound translation factors.

Its subcellular location is the plastid. The protein localises to the chloroplast. Forms part of the ribosomal stalk which helps the ribosome interact with GTP-bound translation factors. Is thus essential for accurate translation. The chain is Large ribosomal subunit protein bL12c from Chara vulgaris (Common stonewort).